Reading from the N-terminus, the 681-residue chain is Auxin response factor 8 (681 aa).

Positions 120 to 222 (FAKTLTQSDA…DLHVGIRRAK (103 aa)) form a DNA-binding region, TF-B3. Disordered stretches follow at residues 474–518 (LRRP…AKPP) and 534–577 (SLSG…TSSE). Polar residues-rich tracts occupy residues 534–555 (SLSGTTSPAATGNSSLNWNTEK) and 564–577 (GVIQNSPTDNTSSE). The PB1 domain occupies 595 to 675 (PGQCKVFIES…RRLTILTDAG (81 aa)).

This sequence belongs to the ARF family. As to quaternary structure, homodimers and heterodimers. As to expression, expressed in roots, culms, leaves and young panicles.

Its subcellular location is the nucleus. In terms of biological role, auxin response factors (ARFs) are transcriptional factors that bind specifically to the DNA sequence 5'-TGTCTC-3' found in the auxin-responsive promoter elements (AuxREs). The polypeptide is Auxin response factor 8 (ARF8) (Oryza sativa subsp. japonica (Rice)).